A 501-amino-acid chain; its full sequence is Myrosinase MA1 (501 aa).

Intrachain disulfides connect cysteine 6/cysteine 438, cysteine 14/cysteine 434, and cysteine 206/cysteine 214. A glycan (N-linked (GlcNAc...) asparagine) is linked at asparagine 21. Glutamine 39 is a substrate binding site. A Zn(2+)-binding site is contributed by histidine 56. A glycan (N-linked (GlcNAc...) asparagine) is linked at asparagine 60. Residue aspartate 70 coordinates Zn(2+). N-linked (GlcNAc...) asparagine glycosylation is present at asparagine 90. Positions 141 and 186 each coordinate substrate. Glutamine 187 provides a ligand contact to L-ascorbate. N-linked (GlcNAc...) asparagine glycans are attached at residues asparagine 218 and asparagine 244. Arginine 259 provides a ligand contact to L-ascorbate. Asparagine 265 and asparagine 292 each carry an N-linked (GlcNAc...) asparagine glycan. Substrate is bound at residue tyrosine 330. N-linked (GlcNAc...) asparagine glycans are attached at residues asparagine 343, asparagine 346, and asparagine 361. Residue glutamate 409 is the Nucleophile of the active site. Substrate-binding positions include tryptophan 457 and 464–465; that span reads EF. N-linked (GlcNAc...) asparagine glycosylation is present at asparagine 482.

Belongs to the glycosyl hydrolase 1 family. Homodimer. As to expression, in vacuoles called myrosin grains of a certain class of cells, myrosin cells, distributed in the cotyledons and the axis of the embryo as well as in different organs of the growing plant.

It is found in the vacuole. The enzyme catalyses a thioglucoside + H2O = a sugar + a thiol.. Functionally, degradation of glucosinolates (glucose residue linked by a thioglucoside bound to an amino acid derivative) to glucose, sulfate and any of the products: thiocyanates, isothiocyanates, nitriles, epithionitriles or oxazolidine-2-thiones. This chain is Myrosinase MA1, found in Sinapis alba (White mustard).